Reading from the N-terminus, the 555-residue chain is Formate--tetrahydrofolate ligase (555 aa).

An ATP-binding site is contributed by 64 to 71 (TPAGEGKT).

It belongs to the formate--tetrahydrofolate ligase family.

The enzyme catalyses (6S)-5,6,7,8-tetrahydrofolate + formate + ATP = (6R)-10-formyltetrahydrofolate + ADP + phosphate. It functions in the pathway one-carbon metabolism; tetrahydrofolate interconversion. The polypeptide is Formate--tetrahydrofolate ligase (Allorhizobium ampelinum (strain ATCC BAA-846 / DSM 112012 / S4) (Agrobacterium vitis (strain S4))).